A 156-amino-acid polypeptide reads, in one-letter code: Lipoprotein signal peptidase (156 aa).

3 consecutive transmembrane segments (helical) span residues 5-25, 64-84, and 89-109; these read FKFI…DQWV, YLHL…KTLL, and IAFG…FIHG. Catalysis depends on residues D113 and D130. Residues 122-142 traverse the membrane as a helical segment; sequence NFAIFNVADVMINISVALILI.

It belongs to the peptidase A8 family.

Its subcellular location is the cell inner membrane. The catalysed reaction is Release of signal peptides from bacterial membrane prolipoproteins. Hydrolyzes -Xaa-Yaa-Zaa-|-(S,diacylglyceryl)Cys-, in which Xaa is hydrophobic (preferably Leu), and Yaa (Ala or Ser) and Zaa (Gly or Ala) have small, neutral side chains.. The protein operates within protein modification; lipoprotein biosynthesis (signal peptide cleavage). In terms of biological role, this protein specifically catalyzes the removal of signal peptides from prolipoproteins. The chain is Lipoprotein signal peptidase from Campylobacter jejuni subsp. jejuni serotype O:23/36 (strain 81-176).